A 612-amino-acid polypeptide reads, in one-letter code: Chaperone protein DnaK (612 aa).

Thr174 is modified (phosphothreonine; by autocatalysis). The disordered stretch occupies residues 579–612 (GSAGTGAGSQAGSAAGSGDGQSMDAEFKVKDEDK). Residues 581-597 (AGTGAGSQAGSAAGSGD) are compositionally biased toward gly residues. A compositionally biased stretch (basic and acidic residues) spans 603-612 (AEFKVKDEDK).

The protein belongs to the heat shock protein 70 family.

Its function is as follows. Acts as a chaperone. In Symbiobacterium thermophilum (strain DSM 24528 / JCM 14929 / IAM 14863 / T), this protein is Chaperone protein DnaK.